The following is a 1187-amino-acid chain: Phospholipid-transporting ATPase IH (1187 aa).

At 1-61 (MDCSLLRTLV…SSKYTFWNFI (61 aa)) the chain is on the cytoplasmic side. The chain crosses the membrane as a helical span at residues 62–82 (PKNLFEQFRRIANFYFLIIFL). The Extracellular segment spans residues 83–88 (VQLIID). A helical transmembrane segment spans residues 89–110 (TPTSPVTSGLPLFFVITVTAIK). Topologically, residues 111 to 296 (QGYEDWLRHK…SAVEKSMNTF (186 aa)) are cytoplasmic. A helical membrane pass occupies residues 297–318 (LIVYLCILVSKALINTVLKYVW). Residues 319–349 (QSEPFRDEPWYNEKTESERQRNLFLRAFTDF) are Extracellular-facing. The chain crosses the membrane as a helical span at residues 350–372 (LAFMVLFNYIIPVSMYVTVEMQK). Topologically, residues 373-884 (FLGSYFITWD…GHFYYIRISE (512 aa)) are cytoplasmic. D414 (4-aspartylphosphate intermediate) is an active-site residue. Residues D414, K415, T416, E513, F555, K578, R609, T689, G690, and D691 each contribute to the ATP site. D414 provides a ligand contact to Mg(2+). T416 contributes to the Mg(2+) binding site. S740 is subject to Phosphoserine. ATP contacts are provided by R801 and K807. D828 is a binding site for Mg(2+). ATP contacts are provided by N831 and D832. D832 is a Mg(2+) binding site. The chain crosses the membrane as a helical span at residues 885 to 905 (LVQYFFYKNVCFIFPQFLYQF). Topologically, residues 906–917 (FCGFSQQTLYDT) are extracellular. Residues 918 to 937 (AYLTLYNISFTSLPILLYSL) form a helical membrane-spanning segment. The Cytoplasmic segment spans residues 938–967 (MEQHVGIDVLKRDPTLYRDIAKNALLRWRV). A helical membrane pass occupies residues 968-989 (FIYWTFLGVFDALVFFFGAYFI). Over 990–1003 (FENTTVTINGQMFG) the chain is Extracellular. The helical transmembrane segment at 1004–1026 (NWTFGTLVFTVMVLTVTLKLALD) threads the bilayer. At 1027-1032 (THYWTW) the chain is on the cytoplasmic side. Residues 1033–1053 (INHFVIWGSLLFYIAFSLLWG) form a helical membrane-spanning segment. At 1054–1071 (GVIWPFLSYQRMYYVFIS) the chain is on the extracellular side. Residues 1072-1096 (MLSSGPAWLGIILLVTVGLLPDVLK) form a helical membrane-spanning segment. The Cytoplasmic segment spans residues 1097-1138 (KVLCRQLWPTATERTQNIQHQDSISEFTPLASLPSWGAQGSR). 2 positions are modified to phosphoserine: S1148 and S1158.

The protein belongs to the cation transport ATPase (P-type) (TC 3.A.3) family. Type IV subfamily. Component of a P4-ATPase flippase complex which consists of a catalytic alpha subunit ATP11A and an accessory beta subunit TMEM30A. It depends on Mg(2+) as a cofactor. Post-translationally, proteolytically cleaved by CASP3. As to expression, widely expressed. Expressed in myoblasts. Expressed in retina, brain, liver, testes and kidney (at protein level). Expressed in the inner ear.

The protein localises to the cell membrane. Its subcellular location is the early endosome. The protein resides in the recycling endosome. It localises to the endoplasmic reticulum membrane. It carries out the reaction ATP + H2O + phospholipidSide 1 = ADP + phosphate + phospholipidSide 2.. It catalyses the reaction a 1,2-diacyl-sn-glycero-3-phospho-L-serine(out) + ATP + H2O = a 1,2-diacyl-sn-glycero-3-phospho-L-serine(in) + ADP + phosphate + H(+). The catalysed reaction is a 1,2-diacyl-sn-glycero-3-phosphoethanolamine(out) + ATP + H2O = a 1,2-diacyl-sn-glycero-3-phosphoethanolamine(in) + ADP + phosphate + H(+). Functionally, catalytic component of a P4-ATPase flippase complex which catalyzes the hydrolysis of ATP coupled to the transport of aminophospholipids, phosphatidylserines (PS) and phosphatidylethanolamines (PE), from the outer to the inner leaflet of the plasma membrane. Does not show flippase activity toward phosphatidylcholine (PC). Contributes to the maintenance of membrane lipid asymmetry with a specific role in morphogenesis of muscle cells. In myoblasts, mediates PS enrichment at the inner leaflet of plasma membrane, triggering PIEZO1-dependent Ca2+ influx and Rho GTPases signal transduction, subsequently leading to the assembly of cortical actomyosin fibers and myotube formation. This is Phospholipid-transporting ATPase IH (Atp11a) from Mus musculus (Mouse).